The following is a 208-amino-acid chain: ATP-dependent Clp protease proteolytic subunit (208 aa).

Serine 105 (nucleophile) is an active-site residue. Histidine 130 is an active-site residue.

This sequence belongs to the peptidase S14 family. In terms of assembly, fourteen ClpP subunits assemble into 2 heptameric rings which stack back to back to give a disk-like structure with a central cavity, resembling the structure of eukaryotic proteasomes.

It is found in the cytoplasm. It carries out the reaction Hydrolysis of proteins to small peptides in the presence of ATP and magnesium. alpha-casein is the usual test substrate. In the absence of ATP, only oligopeptides shorter than five residues are hydrolyzed (such as succinyl-Leu-Tyr-|-NHMec, and Leu-Tyr-Leu-|-Tyr-Trp, in which cleavage of the -Tyr-|-Leu- and -Tyr-|-Trp bonds also occurs).. In terms of biological role, cleaves peptides in various proteins in a process that requires ATP hydrolysis. Has a chymotrypsin-like activity. Plays a major role in the degradation of misfolded proteins. The sequence is that of ATP-dependent Clp protease proteolytic subunit from Xanthomonas axonopodis pv. citri (strain 306).